The following is a 404-amino-acid chain: Histidinol dehydrogenase (404 aa).

3 residues coordinate NAD(+): tyrosine 114, glutamine 176, and asparagine 199. Substrate contacts are provided by serine 222, glutamine 244, and histidine 247. Glutamine 244 and histidine 247 together coordinate Zn(2+). Catalysis depends on proton acceptor residues glutamate 300 and histidine 301. Substrate contacts are provided by histidine 301, aspartate 334, glutamate 388, and histidine 393. Aspartate 334 is a binding site for Zn(2+). Histidine 393 is a Zn(2+) binding site.

Belongs to the histidinol dehydrogenase family. Requires Zn(2+) as cofactor.

The catalysed reaction is L-histidinol + 2 NAD(+) + H2O = L-histidine + 2 NADH + 3 H(+). It participates in amino-acid biosynthesis; L-histidine biosynthesis; L-histidine from 5-phospho-alpha-D-ribose 1-diphosphate: step 9/9. Catalyzes the sequential NAD-dependent oxidations of L-histidinol to L-histidinaldehyde and then to L-histidine. This is Histidinol dehydrogenase (hisD) from Archaeoglobus fulgidus (strain ATCC 49558 / DSM 4304 / JCM 9628 / NBRC 100126 / VC-16).